We begin with the raw amino-acid sequence, 371 residues long: Liposome tubulation protein MamY (371 aa).

Topologically, residues 1–18 are cytoplasmic; it reads MLMNFVNNVSKTINGGAR. Residues 19–39 traverse the membrane as a helical segment; sequence IVYVGSFSWAVLSLLFVTAFS. Over 40–51 the chain is Lumenal; sequence GWNNIFSMLPHE. A helical transmembrane segment spans residues 52 to 72; sequence IFILVLTISLPIALIVLIFML. Residues 73–371 are Cytoplasmic-facing; it reads SQIVRTVESV…LIDGTPISDA (299 aa).

The protein belongs to the magnetosome MamY family. As to quaternary structure, probably interacts with MamX and MamZ proteins.

It is found in the magnetosome membrane. In terms of biological role, may be involved in constriction of the cell inner membrane to form mature magnetosomes. Binds cardiolipin and liposomes. May function with MamX, MamZ amd Mms6 in biomineralization. This chain is Liposome tubulation protein MamY, found in Magnetospirillum gryphiswaldense (strain DSM 6361 / JCM 21280 / NBRC 15271 / MSR-1).